Consider the following 263-residue polypeptide: (2Z,6E)-farnesyl diphosphate synthase (263 aa).

The active site involves Asp-40. Residue Asp-40 coordinates Mg(2+). Residues 41–44 (GNRR), Trp-45, and 86–88 (STE) each bind substrate. Asn-89 serves as the catalytic Proton acceptor. Residues Arg-92, Arg-212, and 218-220 (RLS) each bind substrate. Glu-231 is a Mg(2+) binding site.

This sequence belongs to the UPP synthase family. Z-FPP synthase subfamily. Homodimer. The cofactor is Mg(2+).

It is found in the cell membrane. It carries out the reaction isopentenyl diphosphate + (2E)-geranyl diphosphate = (2Z,6E)-farnesyl diphosphate + diphosphate. Its function is as follows. Catalyzes the condensation of only one isopentenyl pyrophosphate (IPP) unit in the cis configuration to E-geranyl diphosphate (E-GPP) generating the 15 carbon product (2Z,6E)-farnesyl diphosphate (Z-FPP or EZ-FPP). Z-FPP is the precursor of decaprenyl diphosphate, which has a central role in the biosynthesis of the mycobacterial cell wall. In Mycolicibacterium smegmatis (strain ATCC 700084 / mc(2)155) (Mycobacterium smegmatis), this protein is (2Z,6E)-farnesyl diphosphate synthase (uppS).